The following is a 1714-amino-acid chain: Latrophilin Cirl (1714 aa).

At Met1–Arg765 the chain is on the extracellular side. An SUEL-type lectin domain is found at Ala26–Ile115. Residue Asn143 is glycosylated (N-linked (GlcNAc...) asparagine). The tract at residues Pro183–Val302 is disordered. The span at Thr186 to Pro198 shows a compositional bias: low complexity. Polar residues predominate over residues Pro244–Ile262. Residue Asn253 is glycosylated (N-linked (GlcNAc...) asparagine). 2 stretches are compositionally biased toward low complexity: residues Asp272–Ser282 and Ala290–Ser301. Residues Asn299, Asn338, Asn395, Asn652, Asn701, and Asn728 are each glycosylated (N-linked (GlcNAc...) asparagine). A disordered region spans residues Tyr373–Ser397. Residues Arg558 to His752 form the GAIN-B domain. 2 disulfide bridges follow: Cys707–Cys734 and Cys722–Cys736. Positions Cys707–His752 are GPS. Residues Val766–Leu786 traverse the membrane as a helical segment. The Cytoplasmic portion of the chain corresponds to Lys787–Thr799. A helical membrane pass occupies residues Thr800–Ile820. The Extracellular portion of the chain corresponds to Glu821–Ser826. Residues Ile827 to Phe847 form a helical membrane-spanning segment. Residues Cys848–Val873 are Cytoplasmic-facing. The chain crosses the membrane as a helical span at residues Asn874–Ile894. The Extracellular portion of the chain corresponds to Asn895–Asn911. A helical membrane pass occupies residues Ile912 to Tyr932. The Cytoplasmic portion of the chain corresponds to Thr933–Ser966. Residues Phe967–Ala987 traverse the membrane as a helical segment. At Lys988 to Thr994 the chain is on the extracellular side. Residues Thr995–Phe1015 form a helical membrane-spanning segment. Topologically, residues His1016 to Lys1714 are cytoplasmic. Phosphoserine is present on residues Ser1155, Ser1245, and Ser1252. Disordered stretches follow at residues Pro1229–Arg1253, Lys1268–Pro1287, Ala1293–His1354, Gly1447–Met1536, and Phe1551–His1694. Low complexity predominate over residues Gln1296–Gln1315. Ser1317 and Ser1318 each carry phosphoserine. Composition is skewed to low complexity over residues Leu1330 to Leu1348 and Gly1453 to Arg1478. Acidic residues-rich tracts occupy residues Asp1486 to Thr1500 and Cys1510 to Asp1523. The segment covering Asp1524–Met1536 has biased composition (basic and acidic residues). Residues Gly1565–Pro1580 are compositionally biased toward low complexity. Residues Gln1644 to Gln1659 are compositionally biased toward polar residues. Low complexity predominate over residues Ser1660–Pro1675. Basic residues predominate over residues Pro1679–Arg1693.

This sequence belongs to the G-protein coupled receptor 2 family. LN-TM7 subfamily. Forms a heterodimer, consisting of a large extracellular region non-covalently linked to a seven-transmembrane moiety. Proteolytically cleaved into 2 subunits, an extracellular subunit and a seven-transmembrane subunit.

The protein localises to the cell membrane. The protein is Latrophilin Cirl of Drosophila ananassae (Fruit fly).